Reading from the N-terminus, the 251-residue chain is Chromobox protein homolog 7 (251 aa).

A Chromo domain is found at 11-69 (FAVESIRKKRVRKGKVEYLVKWKGWPPKYSTWEPEEHILDPRLVMAYEEKEERDRASGY). The tract at residues 190-220 (EPAAQPPEEEADADLAEGPPPWTPALPSSEV) is disordered. Residues 223 to 236 (TDITANSITVTFRE) form a required for cellular lifespan extension region.

In terms of assembly, component of a PRC1-like complex. Interacts with RING1 and RNF2/RING1B, but not with BMI1, EED or EZH2. Interacts with PCGF1, PCGF2, PCGF3, PCGF5 and PCGF6.

It is found in the nucleus. Functionally, component of a Polycomb group (PcG) multiprotein PRC1-like complex, a complex class required to maintain the transcriptionally repressive state of many genes, including Hox genes, throughout development. PcG PRC1 complex acts via chromatin remodeling and modification of histones; it mediates monoubiquitination of histone H2A 'Lys-119', rendering chromatin heritably changed in its expressibility. Promotes histone H3 trimethylation at 'Lys-9' (H3K9me3). Binds to trimethylated lysine residues in histones, and possibly also other proteins. Regulator of cellular lifespan by maintaining the repression of CDKN2A, but not by inducing telomerase activity. The sequence is that of Chromobox protein homolog 7 (CBX7) from Homo sapiens (Human).